The chain runs to 1435 residues: Neuropathy target esterase sws (1435 aa).

Over 1 to 35 (MDVLELLRVSGSNMYYSTFLADAWCYYISNQITMT) the chain is Lumenal. The chain crosses the membrane as a helical span at residues 36–56 (MYLYCALGVLSMLFIGWFVYF). The Cytoplasmic portion of the chain corresponds to 57–1435 (KRLARLRLRH…NTNNETKNYL (1379 aa)). An a nucleoside 3',5'-cyclic phosphate-binding site is contributed by 176-303 (IFGHFEKPIF…IRVIQVIMIR (128 aa)). Residues 361-372 (AASGTAGSTHTA) are compositionally biased toward low complexity. Disordered regions lie at residues 361–405 (AASG…ELSG) and 422–452 (NSYP…QPEV). Over residues 435–449 (GNLSTRRGSITQQEQ) the composition is skewed to polar residues. Ser443 carries the post-translational modification Phosphoserine. A nucleoside 3',5'-cyclic phosphate is bound by residues 474–601 (ELGL…VVRR) and 590–717 (IVLD…LSHR). Residues 944 to 1110 (LVLGGGGARG…VNNLPGHLWR (167 aa)) form the PNPLA domain. Residues 948 to 953 (GGGARG) carry the GXGXXG motif. The GXSXG signature appears at 975-979 (GVSIG). The Nucleophile role is filled by Ser977. Asp1097 serves as the catalytic Proton acceptor. The short motif at 1097–1099 (DGG) is the DGA/G element. The interval 1308–1435 (MDKATQSTPP…NTNNETKNYL (128 aa)) is disordered. Residues 1311 to 1322 (ATQSTPPLQSKA) are compositionally biased toward polar residues. 2 stretches are compositionally biased toward basic and acidic residues: residues 1330 to 1361 (SKEE…RELS) and 1393 to 1424 (MDKK…KENR). A compositionally biased stretch (polar residues) spans 1425–1435 (SNTNNETKNYL).

It belongs to the NTE family. In terms of assembly, interacts with Pka-C3; interaction inhibits the catalytic function of Pka-C3 and the esterase activity of sws.

Its subcellular location is the endoplasmic reticulum membrane. It carries out the reaction a 1-acyl-sn-glycero-3-phosphocholine + H2O = sn-glycerol 3-phosphocholine + a fatty acid + H(+). Its function is as follows. Phospholipase B that deacylates intracellular phosphatidylcholine (PtdCho), generating glycerophosphocholine (GroPtdCho). This deacylation occurs at both sn-2 and sn-1 positions of PtdCho. Its specific chemical modification by certain organophosphorus (OP) compounds leads to distal axonopathy. Plays a role in the signaling mechanism between neurons and glia that regulates glia wrapping during development of the adult brain. Essential for membrane lipid homeostasis and cell survival in both neurons and glia of the adult brain. The polypeptide is Neuropathy target esterase sws (Drosophila persimilis (Fruit fly)).